The chain runs to 201 residues: Holliday junction resolvase RecU (201 aa).

Mg(2+)-binding residues include Thr-87, Asp-89, Glu-102, and Gln-121.

The protein belongs to the RecU family. Mg(2+) serves as cofactor.

The protein localises to the cytoplasm. The catalysed reaction is Endonucleolytic cleavage at a junction such as a reciprocal single-stranded crossover between two homologous DNA duplexes (Holliday junction).. In terms of biological role, endonuclease that resolves Holliday junction intermediates in genetic recombination. Cleaves mobile four-strand junctions by introducing symmetrical nicks in paired strands. Promotes annealing of linear ssDNA with homologous dsDNA. Required for DNA repair, homologous recombination and chromosome segregation. The sequence is that of Holliday junction resolvase RecU from Listeria welshimeri serovar 6b (strain ATCC 35897 / DSM 20650 / CCUG 15529 / CIP 8149 / NCTC 11857 / SLCC 5334 / V8).